We begin with the raw amino-acid sequence, 394 residues long: Guanine nucleotide-binding protein G(s) subunit alpha (394 aa).

The interval 1–25 (MGCLGDSKTEDQRNEEKAQREANKK) is disordered. The N-palmitoyl glycine moiety is linked to residue Gly-2. Cys-3 is lipidated: S-palmitoyl cysteine. The segment covering 7-25 (SKTEDQRNEEKAQREANKK) has biased composition (basic and acidic residues). Residues 39 to 394 (ATHRLLLLGA…RMHLRQYELL (356 aa)) enclose the G-alpha domain. The tract at residues 42 to 55 (RLLLLGAGESGKST) is G1 motif. Position 47–55 (47–55 (GAGESGKST)) interacts with GTP. Ser-54 is a Mg(2+) binding site. Residues 68–90 (FNGEGGEEDPQAARSNSDGEKAT) form a disordered region. The G2 motif stretch occupies residues 196–204 (DLLRCRVLT). Residues 197–204 (LLRCRVLT), 223–227 (DVGGQ), 292–295 (NKQD), and Ala-366 each bind GTP. Residue Thr-204 participates in Mg(2+) binding. Positions 219 to 228 (FHMFDVGGQR) are G3 motif. Residues 288 to 295 (ILFLNKQD) are G4 motif. The G5 motif stretch occupies residues 364–369 (TCAVDT).

The protein belongs to the G-alpha family. G(s) subfamily. As to quaternary structure, heterotrimeric G proteins are composed of 3 units; alpha, beta and gamma. The alpha chain contains the guanine nucleotide binding site. Interacts with CRY1; the interaction may block GPCR-mediated regulation of cAMP concentrations. Interacts with ADCY6 and stimulates its adenylyl cyclase activity. Interacts with ADCY2 and ADCY5. Stimulates the ADCY5 adenylyl cyclase activity. Interaction with SASH1.

The protein resides in the cell membrane. In terms of biological role, guanine nucleotide-binding proteins (G proteins) function as transducers in numerous signaling pathways controlled by G protein-coupled receptors (GPCRs). Signaling involves the activation of adenylyl cyclases, resulting in increased levels of the signaling molecule cAMP. GNAS functions downstream of several GPCRs, including beta-adrenergic receptors. Stimulates the Ras signaling pathway via RAPGEF2. This is Guanine nucleotide-binding protein G(s) subunit alpha (GNAS) from Cricetulus longicaudatus (Long-tailed dwarf hamster).